Here is a 440-residue protein sequence, read N- to C-terminus: N-succinylarginine dihydrolase (440 aa).

Residues 17–26 (GGLSPGNLAS), Asn-108, and 135–136 (HR) contribute to the substrate site. The segment at 17–37 (GGLSPGNLASQSHVGEPSHPR) is disordered. Glu-172 is a catalytic residue. Arg-210 contacts substrate. His-246 is an active-site residue. Substrate-binding residues include Asp-248 and Asn-358. Cys-364 serves as the catalytic Nucleophile.

Belongs to the succinylarginine dihydrolase family. As to quaternary structure, homodimer.

It carries out the reaction N(2)-succinyl-L-arginine + 2 H2O + 2 H(+) = N(2)-succinyl-L-ornithine + 2 NH4(+) + CO2. It functions in the pathway amino-acid degradation; L-arginine degradation via AST pathway; L-glutamate and succinate from L-arginine: step 2/5. Its function is as follows. Catalyzes the hydrolysis of N(2)-succinylarginine into N(2)-succinylornithine, ammonia and CO(2). The sequence is that of N-succinylarginine dihydrolase from Myxococcus xanthus (strain DK1622).